Reading from the N-terminus, the 157-residue chain is MRVGIGYDVHKLVAERQLVLGGVVIPYEFGLLGHSDADVLIHAIMDALLGAAALGDIGRHFPDNEPRYKGISSMKLLEEVREKLAVKGYSVNNLDAVVVAQAPKLAPYIQAMQQNIARTLQVDLDSVNIKATTTEHLGFAGRGEGIGAYAVCTLQQG.

The a divalent metal cation site is built by Asp-8 and His-10. 4-CDP-2-C-methyl-D-erythritol 2-phosphate-binding positions include 8 to 10 (DVH) and 34 to 35 (HS). His-42 lines the a divalent metal cation pocket. Residues 56-58 (DIG), 61-65 (FPDNE), 132-135 (TTTE), Phe-139, and Arg-142 contribute to the 4-CDP-2-C-methyl-D-erythritol 2-phosphate site.

Belongs to the IspF family. As to quaternary structure, homotrimer. A divalent metal cation is required as a cofactor.

It catalyses the reaction 4-CDP-2-C-methyl-D-erythritol 2-phosphate = 2-C-methyl-D-erythritol 2,4-cyclic diphosphate + CMP. The protein operates within isoprenoid biosynthesis; isopentenyl diphosphate biosynthesis via DXP pathway; isopentenyl diphosphate from 1-deoxy-D-xylulose 5-phosphate: step 4/6. In terms of biological role, involved in the biosynthesis of isopentenyl diphosphate (IPP) and dimethylallyl diphosphate (DMAPP), two major building blocks of isoprenoid compounds. Catalyzes the conversion of 4-diphosphocytidyl-2-C-methyl-D-erythritol 2-phosphate (CDP-ME2P) to 2-C-methyl-D-erythritol 2,4-cyclodiphosphate (ME-CPP) with a corresponding release of cytidine 5-monophosphate (CMP). The sequence is that of 2-C-methyl-D-erythritol 2,4-cyclodiphosphate synthase from Desulforamulus reducens (strain ATCC BAA-1160 / DSM 100696 / MI-1) (Desulfotomaculum reducens).